The sequence spans 656 residues: Methionine--tRNA ligase (656 aa).

The 'HIGH' region motif lies at 13 to 23; the sequence is YYPSGNLHIGH. The short motif at 308-312 is the 'KMSKS' region element; the sequence is KMSKS. ATP is bound at residue Lys311. In terms of domain architecture, tRNA-binding spans 556–656; sequence DFDKVEIKAA…SAIPNGAVIK (101 aa).

Belongs to the class-I aminoacyl-tRNA synthetase family. MetG type 2B subfamily. In terms of assembly, homodimer.

Its subcellular location is the cytoplasm. It catalyses the reaction tRNA(Met) + L-methionine + ATP = L-methionyl-tRNA(Met) + AMP + diphosphate. Its function is as follows. Is required not only for elongation of protein synthesis but also for the initiation of all mRNA translation through initiator tRNA(fMet) aminoacylation. The protein is Methionine--tRNA ligase of Staphylococcus epidermidis (strain ATCC 12228 / FDA PCI 1200).